Here is a 303-residue protein sequence, read N- to C-terminus: Pantothenate synthetase (303 aa).

Residue 30–37 (MGYLHAGH) coordinates ATP. The active-site Proton donor is histidine 37. (R)-pantoate is bound at residue glutamine 61. Glutamine 61 contacts beta-alanine. Position 147 to 150 (147 to 150 (GAKD)) interacts with ATP. Glutamine 153 provides a ligand contact to (R)-pantoate. ATP is bound by residues valine 176 and 184–187 (LSSR).

The protein belongs to the pantothenate synthetase family. As to quaternary structure, homodimer.

It localises to the cytoplasm. The enzyme catalyses (R)-pantoate + beta-alanine + ATP = (R)-pantothenate + AMP + diphosphate + H(+). Its pathway is cofactor biosynthesis; (R)-pantothenate biosynthesis; (R)-pantothenate from (R)-pantoate and beta-alanine: step 1/1. Catalyzes the condensation of pantoate with beta-alanine in an ATP-dependent reaction via a pantoyl-adenylate intermediate. This Rhizobium johnstonii (strain DSM 114642 / LMG 32736 / 3841) (Rhizobium leguminosarum bv. viciae) protein is Pantothenate synthetase.